We begin with the raw amino-acid sequence, 208 residues long: Uridine kinase (208 aa).

11-18 (GGTGSGKS) is a binding site for ATP.

Belongs to the uridine kinase family.

Its subcellular location is the cytoplasm. The enzyme catalyses uridine + ATP = UMP + ADP + H(+). The catalysed reaction is cytidine + ATP = CMP + ADP + H(+). Its pathway is pyrimidine metabolism; CTP biosynthesis via salvage pathway; CTP from cytidine: step 1/3. It functions in the pathway pyrimidine metabolism; UMP biosynthesis via salvage pathway; UMP from uridine: step 1/1. This chain is Uridine kinase, found in Alkaliphilus metalliredigens (strain QYMF).